A 61-amino-acid chain; its full sequence is 2S seed storage albumin protein (61 aa).

This sequence belongs to the 2S seed storage albumins family. The mature protein consists of a small and a large chain linked by 2 disulfide bonds.

Functionally, this is a 2S seed storage protein. Inhibits cell-free protein synthesis. The polypeptide is 2S seed storage albumin protein (Cucurbita moschata (Winter crookneck squash)).